The following is a 381-amino-acid chain: N-acetyl-alpha-D-glucosaminyl L-malate synthase (381 aa).

3 residues coordinate (S)-malate: S16, Y94, and T122. The UDP site is built by N206, Q262, and E290.

It belongs to the glycosyltransferase group 1 family. Glycosyltransferase 4 subfamily. Dimer of tetramers.

It carries out the reaction (S)-malate + UDP-N-acetyl-alpha-D-glucosamine = (S)-malyl N-acetyl-alpha-D-glucosaminide + UDP + H(+). Functionally, involved in bacillithiol (BSH) biosynthesis. Catalyzes the first step of the pathway, the formation of N-acetylglucosaminylmalate (GlcNAc-Mal) from UDP-N-acetylglucosamine (UDP-GlcNAc) and L-malate. This is N-acetyl-alpha-D-glucosaminyl L-malate synthase from Bacillus anthracis.